The sequence spans 343 residues: Multidrug resistance protein MdtN (343 aa).

Residues 1–12 are Cytoplasmic-facing; that stretch reads MESTPKKAPRSK. A helical; Signal-anchor for type II membrane protein transmembrane segment spans residues 13-33; the sequence is FPALLVVALALVALVFVIWRV. Residues 34 to 343 are Periplasmic-facing; the sequence is DSAPSTNDAY…ASAVANLEPQ (310 aa).

Belongs to the membrane fusion protein (MFP) (TC 8.A.1) family. In terms of assembly, could be part of a tripartite efflux system composed of MdtN, MdtO and MdtP.

It is found in the cell inner membrane. Could be involved in resistance to puromycin, acriflavine and tetraphenylarsonium chloride. The polypeptide is Multidrug resistance protein MdtN (mdtN) (Shigella flexneri).